The chain runs to 120 residues: MFYWILLALAIATEITGTLSMKWASVGNGNAGFILMLVMITLSYIFLSFAVKKIALGVAYALWEGIGILFITIFSVLLFDEALSTMKIAGLLTLVAGIVLIKSGTRKPGKPVKEAARATI.

A run of 4 helical transmembrane segments spans residues 1-21, 31-51, 54-74, and 81-101; these read MFYW…TLSM, AGFI…SFAV, IALG…ITIF, and EALS…IVLI.

Belongs to the drug/metabolite transporter (DMT) superfamily. Small multidrug resistance (SMR) (TC 2.A.7.1) family. MdtJ subfamily. Forms a complex with MdtI.

Its subcellular location is the cell inner membrane. Its function is as follows. Catalyzes the excretion of spermidine. The sequence is that of Spermidine export protein MdtJ from Salmonella agona (strain SL483).